We begin with the raw amino-acid sequence, 250 residues long: Probable transcriptional regulatory protein SYNAS_07390 (250 aa).

It belongs to the TACO1 family.

Its subcellular location is the cytoplasm. The chain is Probable transcriptional regulatory protein SYNAS_07390 from Syntrophus aciditrophicus (strain SB).